The chain runs to 239 residues: Ribosomal RNA small subunit methyltransferase G (239 aa).

S-adenosyl-L-methionine-binding positions include Gly79, Phe84, 130-131, and Arg149; that span reads AE.

Belongs to the methyltransferase superfamily. RNA methyltransferase RsmG family.

It localises to the cytoplasm. Specifically methylates the N7 position of a guanine in 16S rRNA. The polypeptide is Ribosomal RNA small subunit methyltransferase G (Lactobacillus delbrueckii subsp. bulgaricus (strain ATCC BAA-365 / Lb-18)).